We begin with the raw amino-acid sequence, 238 residues long: Thymidine kinase a (238 aa).

ATP is bound by residues 38–45 (GPMFSGKS), 70–72 (DTR), and 115–118 (DEAQ). The active-site Proton acceptor is Glu116. Tyr147 contacts substrate. 2 residues coordinate Zn(2+): Cys172 and Cys175. Substrate contacts are provided by residues 191–195 (TELIG) and Tyr200. Cys204 lines the Zn(2+) pocket.

The protein belongs to the thymidine kinase family. As to quaternary structure, monomer and dimer. Dimerization is stimulated by ATP. In terms of tissue distribution, expressed ubiquitously.

The protein localises to the cytoplasm. It catalyses the reaction thymidine + ATP = dTMP + ADP + H(+). The protein operates within purine metabolism. It functions in the pathway pyrimidine metabolism. In terms of biological role, part of the salvage pathway for purine and pyrimidine deoxyribonucleotide synthesis. Phosphorylates preferentially purines over pyrimidines. Mediates tolerance to genotoxins, such as ultraviolet-C (UV-C) irradiation, MMC, a DNA crosslinker, and ZEO, a DNA intercalator, that induce double-strand breaks and thus contributes to several DNA repair pathways by providing deoxythymidine triphosphate that serve as precursors for DNA repair and to balance deoxyribonucleotides pools. The protein is Thymidine kinase a of Arabidopsis thaliana (Mouse-ear cress).